Reading from the N-terminus, the 189-residue chain is Endoribonuclease YbeY (189 aa).

Residues 1–10 show a composition bias toward polar residues; the sequence is MKERSSSPGT. Residues 1–23 form a disordered region; that stretch reads MKERSSSPGTPDSGRRARPKPAK. 3 residues coordinate Zn(2+): H141, H145, and H151.

It belongs to the endoribonuclease YbeY family. The cofactor is Zn(2+).

It is found in the cytoplasm. Its function is as follows. Single strand-specific metallo-endoribonuclease involved in late-stage 70S ribosome quality control and in maturation of the 3' terminus of the 16S rRNA. In Nitrosospira multiformis (strain ATCC 25196 / NCIMB 11849 / C 71), this protein is Endoribonuclease YbeY.